Reading from the N-terminus, the 488-residue chain is Inosine-5'-monophosphate dehydrogenase (488 aa).

2 consecutive CBS domains span residues 95 to 153 (VISN…SIKI) and 157 to 216 (MTKE…AKDE). Residues Asp250 and 300–302 (GIG) each bind NAD(+). K(+) is bound by residues Gly302 and Gly304. Ser305 contributes to the IMP binding site. Residue Cys307 participates in K(+) binding. The active-site Thioimidate intermediate is Cys307. IMP contacts are provided by residues 340-342 (DGG), 363-364 (GS), and 387-391 (YRGMG). Residue Arg403 is the Proton acceptor of the active site. Glu417 serves as a coordination point for IMP. Positions 467–488 (AGLAESHPHDVQITKESPNYSF) are disordered. Glu471, Ser472, and His473 together coordinate K(+).

Belongs to the IMPDH/GMPR family. Homotetramer. K(+) serves as cofactor.

The catalysed reaction is IMP + NAD(+) + H2O = XMP + NADH + H(+). Its pathway is purine metabolism; XMP biosynthesis via de novo pathway; XMP from IMP: step 1/1. Its activity is regulated as follows. Mycophenolic acid (MPA) is a non-competitive inhibitor that prevents formation of the closed enzyme conformation by binding to the same site as the amobile flap. In contrast, mizoribine monophosphate (MZP) is a competitive inhibitor that induces the closed conformation. MPA is a potent inhibitor of mammalian IMPDHs but a poor inhibitor of the bacterial enzymes. MZP is a more potent inhibitor of bacterial IMPDH. Its function is as follows. Catalyzes the conversion of inosine 5'-phosphate (IMP) to xanthosine 5'-phosphate (XMP), the first committed and rate-limiting step in the de novo synthesis of guanine nucleotides, and therefore plays an important role in the regulation of cell growth. This chain is Inosine-5'-monophosphate dehydrogenase, found in Staphylococcus saprophyticus subsp. saprophyticus (strain ATCC 15305 / DSM 20229 / NCIMB 8711 / NCTC 7292 / S-41).